Here is a 630-residue protein sequence, read N- to C-terminus: Tyrosinase (630 aa).

The Cu cation site is built by His69, His92, His101, His317, His321, and His360. The segment at residues 90 to 92 is a cross-link (2'-(S-cysteinyl)-histidine (Cys-His)); it reads CVH.

It belongs to the tyrosinase family. Requires Cu(2+) as cofactor.

The enzyme catalyses 2 L-dopa + O2 = 2 L-dopaquinone + 2 H2O. It catalyses the reaction L-tyrosine + O2 = L-dopaquinone + H2O. This is a copper-containing oxidase that functions in the formation of pigments such as melanins and other polyphenolic compounds. This Aspergillus fumigatus (strain ATCC MYA-4609 / CBS 101355 / FGSC A1100 / Af293) (Neosartorya fumigata) protein is Tyrosinase (tyr1).